We begin with the raw amino-acid sequence, 1085 residues long: Protein CROWDED NUCLEI 3 (1085 aa).

2 coiled-coil regions span residues 51–149 (DEAS…NDLK) and 185–695 (RERA…LDVL). A Glycyl lysine isopeptide (Lys-Gly) (interchain with G-Cter in ubiquitin) cross-link involves residue lysine 318. Positions 404-411 (AKREAALE) match the Nuclear localization signal motif. Lysine 661 participates in a covalent cross-link: Glycyl lysine isopeptide (Lys-Gly) (interchain with G-Cter in ubiquitin). Phosphoserine occurs at positions 764, 787, 825, and 843. Disordered stretches follow at residues 801 to 997 (TVKL…GKAE) and 1020 to 1077 (NNTG…SIGK). Basic and acidic residues predominate over residues 813–825 (SLDRVSGEDHEPS). Basic residues predominate over residues 854 to 868 (RRGRGRGRGRGKSVR). Basic and acidic residues predominate over residues 877–897 (VSRDSKPSDGETPRKRQREQT). Serine 910 is modified (phosphoserine). Residues 932–941 (VSQTPGQTRY) show a composition bias toward polar residues. The span at 949 to 995 (VGTEEDKAQASKGATEKQERVNDDIRKVPSPKETRTPPEGENRENGK) shows a compositional bias: basic and acidic residues. Positions 1045 to 1066 (EEDDENISMIEEENEGEEEEET) are enriched in acidic residues.

It belongs to the CRWN family. As to quaternary structure, core component of the LINC complex which is composed of inner nuclear membrane SUN domain-containing proteins coupled to outer nuclear membrane WIP proteins, the nucleoskeletal CRWN/LINC proteins, and, possibly, KAKU4. As to expression, expressed at low levels in roots, leaves, flowers and flower stalks.

Its subcellular location is the nucleus membrane. The protein resides in the nucleus. It is found in the nucleoplasm. It localises to the cytoplasm. The protein localises to the nucleus lamina. Its function is as follows. Component of SUN-protein-containing multivariate complexes also called LINC complexes which link the nucleoskeleton and cytoskeleton by providing versatile outer nuclear membrane attachment sites for cytoskeletal filaments. Required for nucleus structure organization (e.g. size and shape). The polypeptide is Protein CROWDED NUCLEI 3 (Arabidopsis thaliana (Mouse-ear cress)).